A 431-amino-acid chain; its full sequence is tRNA-specific 2-thiouridylase MnmA (431 aa).

ATP-binding positions include 35 to 42 and L61; that span reads AMSGGVDS. Catalysis depends on C129, which acts as the Nucleophile. Cysteines 129 and 226 form a disulfide. Position 153 (G153) interacts with ATP. The tract at residues 176 to 178 is interaction with tRNA; it reads RDQ. The active-site Cysteine persulfide intermediate is the C226. The tract at residues 407–431 is disordered; the sequence is PKPPNEDLLDTNESSDLVSPKRSAC.

This sequence belongs to the MnmA/TRMU family.

It localises to the cytoplasm. The catalysed reaction is S-sulfanyl-L-cysteinyl-[protein] + uridine(34) in tRNA + AH2 + ATP = 2-thiouridine(34) in tRNA + L-cysteinyl-[protein] + A + AMP + diphosphate + H(+). Its function is as follows. Catalyzes the 2-thiolation of uridine at the wobble position (U34) of tRNA, leading to the formation of s(2)U34. The polypeptide is tRNA-specific 2-thiouridylase MnmA (Beijerinckia indica subsp. indica (strain ATCC 9039 / DSM 1715 / NCIMB 8712)).